A 327-amino-acid polypeptide reads, in one-letter code: Gonadotropin-releasing hormone receptor (327 aa).

Over M1–R38 the chain is Extracellular. N4 and N18 each carry an N-linked (GlcNAc...) asparagine glycan. Residues V39–V58 form a helical membrane-spanning segment. The Cytoplasmic segment spans residues K59–K77. Residues V78–L97 traverse the membrane as a helical segment. Residues D98–K115 lie on the Extracellular side of the membrane. The N-linked (GlcNAc...) asparagine glycan is linked to N102. C114 and C195 are disulfide-bonded. Residues V116–L137 traverse the membrane as a helical segment. At D138 to W164 the chain is on the cytoplasmic side. A helical membrane pass occupies residues I165–A184. At D185 to N211 the chain is on the extracellular side. The chain crosses the membrane as a helical span at residues F212–A231. At K232–T280 the chain is on the cytoplasmic side. A helical membrane pass occupies residues P281–V299. At S300 to H305 the chain is on the extracellular side. A helical membrane pass occupies residues F306–F325. Residues S326 to L327 lie on the Cytoplasmic side of the membrane.

It belongs to the G-protein coupled receptor 1 family.

The protein resides in the cell membrane. In terms of biological role, receptor for gonadotropin releasing hormone (GnRH) that mediates the action of GnRH to stimulate the secretion of the gonadotropic hormones luteinizing hormone (LH) and follicle-stimulating hormone (FSH). This receptor mediates its action by association with G-proteins that activate a phosphatidylinositol-calcium second messenger system. The sequence is that of Gonadotropin-releasing hormone receptor (Gnrhr) from Rattus norvegicus (Rat).